The sequence spans 621 residues: uncharacterized protein (621 aa).

3 helical membrane passes run 240 to 260 (FFDA…NLLW), 548 to 568 (LGIV…VWTV), and 587 to 607 (VIIG…LTFM).

The protein localises to the cell membrane. This is an uncharacterized protein from Mycoplasma pneumoniae (strain ATCC 29342 / M129 / Subtype 1) (Mycoplasmoides pneumoniae).